We begin with the raw amino-acid sequence, 449 residues long: Biotin carboxylase (449 aa).

Residues 1 to 445 (MLEKVLIANR…NIHYLEKKLG (445 aa)) form the Biotin carboxylation domain. Residues K116, K159, 165–166 (GG), 201–204 (EKFL), H209, and H236 each bind ATP. The region spanning 120–317 (KDAMKRAGVP…IVKEMLRIAS (198 aa)) is the ATP-grasp domain. Position 238 (K238) interacts with hydrogencarbonate. ATP is bound by residues E276 and E288. 3 residues coordinate Mg(2+): E276, E288, and N290. Residues E276, E288, and N290 each contribute to the Mn(2+) site. The hydrogencarbonate site is built by R292, V295, and R338. Residue R292 is part of the active site. Residue R338 participates in biotin binding.

Acetyl-CoA carboxylase is a heterohexamer of biotin carboxyl carrier protein, biotin carboxylase and the two subunits of carboxyl transferase in a 2:2 complex. Mg(2+) serves as cofactor. Requires Mn(2+) as cofactor.

It catalyses the reaction N(6)-biotinyl-L-lysyl-[protein] + hydrogencarbonate + ATP = N(6)-carboxybiotinyl-L-lysyl-[protein] + ADP + phosphate + H(+). The protein operates within lipid metabolism; malonyl-CoA biosynthesis; malonyl-CoA from acetyl-CoA: step 1/1. Its function is as follows. This protein is a component of the acetyl coenzyme A carboxylase complex; first, biotin carboxylase catalyzes the carboxylation of the carrier protein and then the transcarboxylase transfers the carboxyl group to form malonyl-CoA. The polypeptide is Biotin carboxylase (accC) (Pseudomonas aeruginosa (strain ATCC 15692 / DSM 22644 / CIP 104116 / JCM 14847 / LMG 12228 / 1C / PRS 101 / PAO1)).